The chain runs to 302 residues: Sulfate adenylyltransferase subunit 2 (302 aa).

This sequence belongs to the PAPS reductase family. CysD subfamily. Heterodimer composed of CysD, the smaller subunit, and CysN.

The catalysed reaction is sulfate + ATP + H(+) = adenosine 5'-phosphosulfate + diphosphate. Its pathway is sulfur metabolism; hydrogen sulfide biosynthesis; sulfite from sulfate: step 1/3. With CysN forms the ATP sulfurylase (ATPS) that catalyzes the adenylation of sulfate producing adenosine 5'-phosphosulfate (APS) and diphosphate, the first enzymatic step in sulfur assimilation pathway. APS synthesis involves the formation of a high-energy phosphoric-sulfuric acid anhydride bond driven by GTP hydrolysis by CysN coupled to ATP hydrolysis by CysD. This is Sulfate adenylyltransferase subunit 2 from Buchnera aphidicola subsp. Acyrthosiphon pisum (strain 5A).